The chain runs to 294 residues: Urease accessory protein UreD 1 (294 aa).

The disordered stretch occupies residues 1–22 (MALSLDGLPEKPAPAEAPSPPV). Over residues 11–21 (KPAPAEAPSPP) the composition is skewed to pro residues.

The protein belongs to the UreD family. In terms of assembly, ureD, UreF and UreG form a complex that acts as a GTP-hydrolysis-dependent molecular chaperone, activating the urease apoprotein by helping to assemble the nickel containing metallocenter of UreC. The UreE protein probably delivers the nickel.

It localises to the cytoplasm. Functionally, required for maturation of urease via the functional incorporation of the urease nickel metallocenter. This Methylorubrum extorquens (strain PA1) (Methylobacterium extorquens) protein is Urease accessory protein UreD 1.